The sequence spans 167 residues: Phosphopantetheine adenylyltransferase (167 aa).

S11 is a substrate binding site. Residues 11-12 (SF) and H19 each bind ATP. K43, T76, and R90 together coordinate substrate. ATP-binding positions include 91–93 (GIR), E101, and 126–132 (YDALSST).

It belongs to the bacterial CoaD family. As to quaternary structure, homohexamer. It depends on Mg(2+) as a cofactor.

The protein resides in the cytoplasm. It catalyses the reaction (R)-4'-phosphopantetheine + ATP + H(+) = 3'-dephospho-CoA + diphosphate. It functions in the pathway cofactor biosynthesis; coenzyme A biosynthesis; CoA from (R)-pantothenate: step 4/5. Its function is as follows. Reversibly transfers an adenylyl group from ATP to 4'-phosphopantetheine, yielding dephospho-CoA (dPCoA) and pyrophosphate. The polypeptide is Phosphopantetheine adenylyltransferase (Lacticaseibacillus casei (strain BL23) (Lactobacillus casei)).